The following is a 349-amino-acid chain: Palmitoyltransferase PFA5 (349 aa).

Helical transmembrane passes span 19-39 and 57-77; these read LIPF…CHQF and LIIV…LMLV. Residues 126–176 form the DHHC domain; the sequence is IWCSNCQSLKMSRTHHSTKVGYCVPRFDHYCVWIGTVLGRLNYKLFVQFTF. The S-palmitoyl cysteine intermediate role is filled by Cys156. A run of 2 helical transmembrane segments spans residues 170–190 and 204–224; these read LFVQ…ISIA and VYAV…LFLT.

The protein belongs to the DHHC palmitoyltransferase family. PFA5 subfamily.

The protein resides in the membrane. The catalysed reaction is L-cysteinyl-[protein] + hexadecanoyl-CoA = S-hexadecanoyl-L-cysteinyl-[protein] + CoA. The chain is Palmitoyltransferase PFA5 (PFA5) from Kluyveromyces lactis (strain ATCC 8585 / CBS 2359 / DSM 70799 / NBRC 1267 / NRRL Y-1140 / WM37) (Yeast).